The primary structure comprises 467 residues: tRNA-2-methylthio-N(6)-dimethylallyladenosine synthase (467 aa).

The tract at residues 1–20 is disordered; sequence MSDDTTQIEPAMAQETSPRA. The region spanning 23 to 143 is the MTTase N-terminal domain; it reads RKVFVKTYGC…LPNALARVRG (121 aa). The [4Fe-4S] cluster site is built by C32, C68, C106, C184, C188, and C191. One can recognise a Radical SAM core domain in the interval 170–402; it reads RKRGVSAFLT…QALLSAQQYA (233 aa). The region spanning 405–467 is the TRAM domain; sequence DSMIGRKMDV…TNSLIAQKLA (63 aa).

This sequence belongs to the methylthiotransferase family. MiaB subfamily. Monomer. It depends on [4Fe-4S] cluster as a cofactor.

The protein localises to the cytoplasm. The catalysed reaction is N(6)-dimethylallyladenosine(37) in tRNA + (sulfur carrier)-SH + AH2 + 2 S-adenosyl-L-methionine = 2-methylsulfanyl-N(6)-dimethylallyladenosine(37) in tRNA + (sulfur carrier)-H + 5'-deoxyadenosine + L-methionine + A + S-adenosyl-L-homocysteine + 2 H(+). In terms of biological role, catalyzes the methylthiolation of N6-(dimethylallyl)adenosine (i(6)A), leading to the formation of 2-methylthio-N6-(dimethylallyl)adenosine (ms(2)i(6)A) at position 37 in tRNAs that read codons beginning with uridine. The sequence is that of tRNA-2-methylthio-N(6)-dimethylallyladenosine synthase from Brucella suis (strain ATCC 23445 / NCTC 10510).